The primary structure comprises 201 residues: Pro-P-factor (201 aa).

An N-terminal signal peptide occupies residues 1 to 20; sequence MKITAVIALLFSLAAASPIP. Propeptides lie at residues 21–31, 58–65, 92–99, 126–133, and 160–201; these read VADPGVVSVSK, EFEAAPAK, EFEAAPEK, and TEED…KFES. N-linked (GlcNAc...) asparagine glycosylation is found at Asn187 and Asn194.

Post-translationally, proteolytically cleaved by kpr, probably at the C-terminal side of dibasic Lys-Arg residues. In terms of processing, glycosylated. Most of the precursor molecules are glycosylated on at least one site, but only a small proportion are glycosylated on both sites.

It localises to the secreted. Its function is as follows. In h- cells under nutritional starvation, P-factor induces alteration of cell morphology toward mating, arrest of the cell cycle at the G1 phase prior to the initiation of DNA synthesis and indirect transcriptional activation of the sxa2 gene which down-regulates the signaling pathway. The polypeptide is Pro-P-factor (map2) (Schizosaccharomyces pombe (strain 972 / ATCC 24843) (Fission yeast)).